The sequence spans 603 residues: Elongation factor 4 (603 aa).

The region spanning 7-189 (SRLRNFCIIA…AVVDRIPSPK (183 aa)) is the tr-type G domain. GTP-binding positions include 19 to 24 (DHGKST) and 136 to 139 (NKVD).

The protein belongs to the TRAFAC class translation factor GTPase superfamily. Classic translation factor GTPase family. LepA subfamily.

Its subcellular location is the cell inner membrane. The enzyme catalyses GTP + H2O = GDP + phosphate + H(+). Its function is as follows. Required for accurate and efficient protein synthesis under certain stress conditions. May act as a fidelity factor of the translation reaction, by catalyzing a one-codon backward translocation of tRNAs on improperly translocated ribosomes. Back-translocation proceeds from a post-translocation (POST) complex to a pre-translocation (PRE) complex, thus giving elongation factor G a second chance to translocate the tRNAs correctly. Binds to ribosomes in a GTP-dependent manner. The sequence is that of Elongation factor 4 from Prochlorococcus marinus (strain NATL2A).